A 418-amino-acid polypeptide reads, in one-letter code: F-box/LRR-repeat protein 14 (418 aa).

Residues 2-48 form the F-box domain; the sequence is ETHISCLFPELLAMIFGYLDVRDKGRAAQVCTAWRDAAYHKSVWRGV. Residues 2–48 are required for down-regulation of SNAI1; it reads ETHISCLFPELLAMIFGYLDVRDKGRAAQVCTAWRDAAYHKSVWRGV. LRR repeat units follow at residues 144–163, 170–191, 203–225, 229–250, and 254–275; these read GLEVLELGGCSNITNTGLLL, RLKSLNLRSCRHLSDVGIGHLA, GLEQLTLQDCQKLTDLSLKHISR, GLRLLNLSFCGGISDAGLLHLS, and SLRSLNLRSCDNISDTGIMHLA.

As to quaternary structure, part of a SCF (SKP1-cullin-F-box) ubiquitin-protein ligase complex. Interacts with SKP1 and CUL1. Interacts with SNAI1; the interaction requires the phosphorylation of the two serine residues in the substrate destruction motif D-S-G-X(2,3,4)-S.

The protein resides in the cytoplasm. In terms of biological role, substrate-recognition component of some SCF (SKP1-CUL1-F-box protein)-type E3 ubiquitin-protein ligase complexes. The SCF(FBXL14) complex acts by mediating ubiquitination and subsequent degradation of SNAI1. The sequence is that of F-box/LRR-repeat protein 14 (FBXL14) from Homo sapiens (Human).